The sequence spans 84 residues: Alpha-mammal toxin Aah3 (84 aa).

Positions 1 to 19 (MNYLVMISLALLLMTGVES) are cleaved as a signal peptide. The LCN-type CS-alpha/beta domain maps to 21-82 (RDGYIVDSKN…PIKDPSYKCH (62 aa)). 4 disulfides stabilise this stretch: Cys31/Cys81, Cys35/Cys53, Cys39/Cys63, and Cys43/Cys65. A propeptide (removed by a carboxypeptidase) is located at residue Arg84.

The protein belongs to the long (4 C-C) scorpion toxin superfamily. Sodium channel inhibitor family. Alpha subfamily. As to expression, expressed by the venom gland.

Its subcellular location is the secreted. Its function is as follows. Alpha toxins bind voltage-independently at site-3 of sodium channels (Nav) and inhibit the inactivation of the activated channels, thereby blocking neuronal transmission. The sequence is that of Alpha-mammal toxin Aah3 from Androctonus australis (Sahara scorpion).